A 423-amino-acid polypeptide reads, in one-letter code: UPF0229 protein PSPTO_0546 (423 aa).

Positions 65-110 (HHGRGGKQTVVHPGNKEFTTGEHIARPQGGAGGKGPGKAGNSGEGM) are disordered. Over residues 93-107 (GGAGGKGPGKAGNSG) the composition is skewed to gly residues.

The protein belongs to the UPF0229 family.

This Pseudomonas syringae pv. tomato (strain ATCC BAA-871 / DC3000) protein is UPF0229 protein PSPTO_0546.